The chain runs to 314 residues: Porphobilinogen deaminase (314 aa).

Cysteine 249 carries the S-(dipyrrolylmethanemethyl)cysteine modification.

It belongs to the HMBS family. In terms of assembly, monomer. It depends on dipyrromethane as a cofactor.

The catalysed reaction is 4 porphobilinogen + H2O = hydroxymethylbilane + 4 NH4(+). The protein operates within porphyrin-containing compound metabolism; protoporphyrin-IX biosynthesis; coproporphyrinogen-III from 5-aminolevulinate: step 2/4. Functionally, tetrapolymerization of the monopyrrole PBG into the hydroxymethylbilane pre-uroporphyrinogen in several discrete steps. The polypeptide is Porphobilinogen deaminase (Brucella abortus (strain S19)).